The sequence spans 381 residues: Malonyl-CoA-acyl carrier protein transacylase, mitochondrial (381 aa).

Active-site residues include Ser151 and His268. Lys312 carries the post-translational modification N6-succinyllysine.

The protein belongs to the type II malonyltransferase family. Expressed in retinal ganglion cells.

It localises to the mitochondrion. The catalysed reaction is holo-[ACP] + malonyl-CoA = malonyl-[ACP] + CoA. It functions in the pathway lipid metabolism; fatty acid biosynthesis. Catalyzes the transfer of a malonyl moiety from malonyl-CoA to the free thiol group of the phosphopantetheine arm of the mitochondrial ACP protein (NDUFAB1). This suggests the existence of the biosynthesis of fatty acids in mitochondria. The chain is Malonyl-CoA-acyl carrier protein transacylase, mitochondrial from Mus musculus (Mouse).